The sequence spans 671 residues: DNA ligase (671 aa).

NAD(+) contacts are provided by residues 32-36 (DVEYD), 81-82 (SL), and glutamate 113. Lysine 115 (N6-AMP-lysine intermediate) is an active-site residue. NAD(+)-binding residues include arginine 136, glutamate 173, lysine 290, and lysine 314. Zn(2+) contacts are provided by cysteine 408, cysteine 411, cysteine 426, and cysteine 432. The BRCT domain maps to 593–671 (EIDSPFAGKT…EAEMLRLLGS (79 aa)).

Belongs to the NAD-dependent DNA ligase family. LigA subfamily. The cofactor is Mg(2+). Mn(2+) serves as cofactor.

The enzyme catalyses NAD(+) + (deoxyribonucleotide)n-3'-hydroxyl + 5'-phospho-(deoxyribonucleotide)m = (deoxyribonucleotide)n+m + AMP + beta-nicotinamide D-nucleotide.. Functionally, DNA ligase that catalyzes the formation of phosphodiester linkages between 5'-phosphoryl and 3'-hydroxyl groups in double-stranded DNA using NAD as a coenzyme and as the energy source for the reaction. It is essential for DNA replication and repair of damaged DNA. In Escherichia coli O17:K52:H18 (strain UMN026 / ExPEC), this protein is DNA ligase.